Here is a 426-residue protein sequence, read N- to C-terminus: Glucose-6-phosphate isomerase (426 aa).

E282 functions as the Proton donor in the catalytic mechanism. Residues H303 and K417 contribute to the active site.

The protein belongs to the GPI family.

It is found in the cytoplasm. It carries out the reaction alpha-D-glucose 6-phosphate = beta-D-fructose 6-phosphate. Its pathway is carbohydrate biosynthesis; gluconeogenesis. The protein operates within carbohydrate degradation; glycolysis; D-glyceraldehyde 3-phosphate and glycerone phosphate from D-glucose: step 2/4. Functionally, catalyzes the reversible isomerization of glucose-6-phosphate to fructose-6-phosphate. The polypeptide is Glucose-6-phosphate isomerase (Onion yellows phytoplasma (strain OY-M)).